The sequence spans 437 residues: Enolase (437 aa).

A (2R)-2-phosphoglycerate-binding site is contributed by Gln162. Glu204 serves as the catalytic Proton donor. Residues Asp251, Glu297, and Asp324 each coordinate Mg(2+). Lys349, Arg378, Ser379, and Lys400 together coordinate (2R)-2-phosphoglycerate. Lys349 acts as the Proton acceptor in catalysis.

It belongs to the enolase family. Mg(2+) serves as cofactor.

The protein localises to the cytoplasm. The protein resides in the secreted. It localises to the cell surface. The catalysed reaction is (2R)-2-phosphoglycerate = phosphoenolpyruvate + H2O. It functions in the pathway carbohydrate degradation; glycolysis; pyruvate from D-glyceraldehyde 3-phosphate: step 4/5. Functionally, catalyzes the reversible conversion of 2-phosphoglycerate (2-PG) into phosphoenolpyruvate (PEP). It is essential for the degradation of carbohydrates via glycolysis. The polypeptide is Enolase (Chlorobium luteolum (strain DSM 273 / BCRC 81028 / 2530) (Pelodictyon luteolum)).